A 126-amino-acid chain; its full sequence is Histone H2B type 1-B (126 aa).

Residues 1 to 12 (MPEPSKSAPAPK) show a composition bias toward low complexity. The segment at 1–35 (MPEPSKSAPAPKKGSKKAITKAQKKDGKKRKRSRK) is disordered. Position 2 is an N-acetylproline (P2). E3 carries the post-translational modification ADP-ribosyl glutamic acid. K6 is modified (N6-(2-hydroxyisobutyryl)lysine; alternate). K6 carries the N6-(beta-hydroxybutyryl)lysine; alternate modification. K6 carries the post-translational modification N6-acetyllysine; alternate. K6 is subject to N6-butyryllysine; alternate. K6 carries the post-translational modification N6-crotonyllysine; alternate. An N6-lactoyllysine; alternate modification is found at K6. K6 participates in a covalent cross-link: Glycyl lysine isopeptide (Lys-Gly) (interchain with G-Cter in SUMO2); alternate. At S7 the chain carries ADP-ribosylserine. The residue at position 12 (K12) is an N6-(beta-hydroxybutyryl)lysine; alternate. N6-acetyllysine; alternate occurs at positions 12 and 13. An N6-crotonyllysine; alternate mark is found at K12 and K13. K12 is subject to N6-lactoyllysine; alternate. Position 13 is an N6-(2-hydroxyisobutyryl)lysine; alternate (K13). Phosphoserine; by STK4/MST1 is present on S15. N6-acetyllysine; alternate occurs at positions 16, 17, 21, and 24. Residues K16, K17, K21, and K24 each carry the N6-crotonyllysine; alternate modification. K16, K17, K21, and K24 each carry N6-lactoyllysine; alternate. Residues K17 and K21 each carry the N6-(beta-hydroxybutyryl)lysine; alternate modification. The residue at position 17 (K17) is an N6-glutaryllysine; alternate. Residues K21 and K24 each carry the N6-(2-hydroxyisobutyryl)lysine; alternate modification. Position 21 is an N6-butyryllysine; alternate (K21). A Glycyl lysine isopeptide (Lys-Gly) (interchain with G-Cter in SUMO2); alternate cross-link involves residue K21. Residue K25 is modified to N6-(2-hydroxyisobutyryl)lysine. The residue at position 35 (K35) is an N6-(2-hydroxyisobutyryl)lysine; alternate. Residue K35 is modified to N6-(beta-hydroxybutyryl)lysine; alternate. N6-crotonyllysine; alternate is present on K35. K35 carries the post-translational modification N6-glutaryllysine; alternate. K35 carries the N6-succinyllysine; alternate modification. K35 is covalently cross-linked (Glycyl lysine isopeptide (Lys-Gly) (interchain with G-Cter in ubiquitin); alternate). E36 is subject to PolyADP-ribosyl glutamic acid. Residue S37 is modified to Phosphoserine; by AMPK. N6-(2-hydroxyisobutyryl)lysine; alternate occurs at positions 44, 47, and 58. At K44 the chain carries N6-lactoyllysine; alternate. N6-glutaryllysine; alternate is present on residues K44 and K47. Position 47 is an N6-methyllysine; alternate (K47). K58 carries the post-translational modification N6,N6-dimethyllysine; alternate. At R80 the chain carries Dimethylated arginine. An N6-(2-hydroxyisobutyryl)lysine; alternate modification is found at K86. Residue K86 is modified to N6-(beta-hydroxybutyryl)lysine; alternate. Residue K86 is modified to N6-acetyllysine; alternate. Position 86 is an N6-lactoyllysine; alternate (K86). An N6,N6,N6-trimethyllysine; alternate modification is found at K86. An omega-N-methylarginine mark is found at R87 and R93. Position 109 is an N6-(2-hydroxyisobutyryl)lysine; alternate (K109). Residue K109 is modified to N6-lactoyllysine; alternate. An N6-glutaryllysine; alternate modification is found at K109. N6-methyllysine; alternate is present on K109. S113 carries an O-linked (GlcNAc) serine glycan. Residue T116 is modified to Phosphothreonine. An N6-(2-hydroxyisobutyryl)lysine; alternate mark is found at K117 and K121. An N6-(beta-hydroxybutyryl)lysine; alternate mark is found at K117 and K121. N6-lactoyllysine; alternate is present on residues K117 and K121. 2 positions are modified to N6-glutaryllysine; alternate: K117 and K121. N6-succinyllysine; alternate occurs at positions 117 and 121. At K117 the chain carries N6-malonyllysine; alternate. At K117 the chain carries N6-methylated lysine; alternate. Residue K121 forms a Glycyl lysine isopeptide (Lys-Gly) (interchain with G-Cter in ubiquitin); alternate linkage.

Belongs to the histone H2B family. The nucleosome is a histone octamer containing two molecules each of H2A, H2B, H3 and H4 assembled in one H3-H4 heterotetramer and two H2A-H2B heterodimers. The octamer wraps approximately 147 bp of DNA. Monoubiquitination at Lys-35 (H2BK34Ub) by the MSL1/MSL2 dimer is required for histone H3 'Lys-4' (H3K4me) and 'Lys-79' (H3K79me) methylation and transcription activation at specific gene loci, such as HOXA9 and MEIS1 loci. Similarly, monoubiquitination at Lys-121 (H2BK120Ub) by the RNF20/40 complex gives a specific tag for epigenetic transcriptional activation and is also prerequisite for histone H3 'Lys-4' and 'Lys-79' methylation. It also functions cooperatively with the FACT dimer to stimulate elongation by RNA polymerase II. H2BK120Ub also acts as a regulator of mRNA splicing: deubiquitination by USP49 is required for efficient cotranscriptional splicing of a large set of exons. Post-translationally, phosphorylation at Ser-37 (H2BS36ph) by AMPK in response to stress promotes transcription. Phosphorylated on Ser-15 (H2BS14ph) by STK4/MST1 during apoptosis; which facilitates apoptotic chromatin condensation. Also phosphorylated on Ser-15 in response to DNA double strand breaks (DSBs), and in correlation with somatic hypermutation and immunoglobulin class-switch recombination. In terms of processing, glcNAcylation at Ser-113 promotes monoubiquitination of Lys-121. It fluctuates in response to extracellular glucose, and associates with transcribed genes. ADP-ribosylated by PARP1 or PARP2 on Ser-7 (H2BS6ADPr) in response to DNA damage. H2BS6ADPr promotes recruitment of CHD1L. Mono-ADP-ribosylated on Glu-3 (H2BE2ADPr) by PARP3 in response to single-strand breaks. Poly ADP-ribosylation on Glu-36 (H2BE35ADPr) by PARP1 regulates adipogenesis: it inhibits phosphorylation at Ser-37 (H2BS36ph), thereby blocking expression of pro-adipogenetic genes. Post-translationally, crotonylation (Kcr) is specifically present in male germ cells and marks testis-specific genes in post-meiotic cells, including X-linked genes that escape sex chromosome inactivation in haploid cells. Crotonylation marks active promoters and enhancers and confers resistance to transcriptional repressors. It is also associated with post-meiotically activated genes on autosomes. In terms of processing, lactylated in macrophages by EP300/P300 by using lactoyl-CoA directly derived from endogenous or exogenous lactate, leading to stimulates gene transcription.

The protein resides in the nucleus. The protein localises to the chromosome. Core component of nucleosome. Nucleosomes wrap and compact DNA into chromatin, limiting DNA accessibility to the cellular machineries which require DNA as a template. Histones thereby play a central role in transcription regulation, DNA repair, DNA replication and chromosomal stability. DNA accessibility is regulated via a complex set of post-translational modifications of histones, also called histone code, and nucleosome remodeling. This chain is Histone H2B type 1-B, found in Homo sapiens (Human).